Reading from the N-terminus, the 683-residue chain is MDDYRYRDNYEGYAPSDGYYRSNEQNQEEDAQSDVTEGHDEEDEIYEGEYQGIPHPDDVKSKQTKMAPSRADGLGGQADLMAERMEDEEELAHQYETIIDECGHGRFQWTLFFVLGLALMADGVEIFVVSFALPSAEKDMCLSSSKKGMLGLIVYLGMMAGAFILGGLADKLGRKKVLSMSLAINASFASLSSFVQGYGAFLFCRLISGIGIGGSLPIVFAYFSEFLSREKRGEHLSWLGIFWMTGGIYASAMAWSIIPHYGWGFSMGTNYHFHSWRVFVIVCALPATVSMVALKFMPESPRFLLEMGKHDEAWMILKQVHDTNMRAKGTPEKVFTVSHIKTPKQMDEFIEIQSSTGTWYQRWLVRFMTIFKQVWDNALYCVMGPYRMNTLILAVVWFTMALSYYGLTVWFPDMIRYFQDEEYKSKMKVFFGEHVHGATINFTMENQIHQHGKLVNDKFIKMYFKHVLFEDTFFDKCYFEDVTSTDTYFKNCTIESTTFYNTDLYKHKFINCRFINSTFLEQKEGCHMDFEEDNDFLIYLVSFLGSLSVLPGNIISALLMDRIGRLKMIGGSMLISAVCCFFLFFGNSESAMIGWQCLFCGTSIAAWNALDVITVELYPTNQRATAFGILNGLCKFGAILGNTIFASFVGITKVVPILLAAASLVGGGLIALRLPETREQVLM.

The span at Met-1–Tyr-10 shows a compositional bias: basic and acidic residues. Residues Met-1–Gly-73 are disordered. At Met-1–Thr-110 the chain is on the cytoplasmic side. Ser-33 carries the phosphoserine modification. At Thr-36 the chain carries Phosphothreonine. A helical transmembrane segment spans residues Leu-111 to Phe-131. Residues Ala-132–Gly-148 are Extracellular-facing. Residues Met-149–Ala-169 traverse the membrane as a helical segment. Topologically, residues Asp-170 to Leu-182 are cytoplasmic. The chain crosses the membrane as a helical span at residues Ala-183 to Phe-203. Residues Cys-204–Arg-205 lie on the Extracellular side of the membrane. Residues Leu-206 to Phe-226 form a helical membrane-spanning segment. The Cytoplasmic segment spans residues Leu-227 to Ser-237. Residues Trp-238–Ile-258 form a helical membrane-spanning segment. Topologically, residues Pro-259 to Arg-277 are extracellular. The helical transmembrane segment at Val-278–Pro-298 threads the bilayer. Over Glu-299 to Thr-390 the chain is Cytoplasmic. The chain crosses the membrane as a helical span at residues Leu-391–Phe-411. Residues Pro-412–Asp-535 are Extracellular-facing. Position 423 is a phosphotyrosine (Tyr-423). Asn-441, Asn-491, and Asn-516 each carry an N-linked (GlcNAc...) asparagine glycan. A helical transmembrane segment spans residues Phe-536 to Ser-556. Residues Ala-557 to Arg-565 are Cytoplasmic-facing. A helical transmembrane segment spans residues Leu-566 to Gly-586. The Extracellular segment spans residues Asn-587–Met-592. The chain crosses the membrane as a helical span at residues Ile-593–Ile-613. Topologically, residues Thr-614–Ala-626 are cytoplasmic. A helical transmembrane segment spans residues Phe-627–Val-649. Residues Gly-650–Lys-653 lie on the Extracellular side of the membrane. The chain crosses the membrane as a helical span at residues Val-654–Leu-672. The Cytoplasmic segment spans residues Arg-673 to Met-683.

Belongs to the major facilitator superfamily. In terms of assembly, interacts with SYT1 in a calcium-independent manner. Forms a complex with SYT1, syntaxin-1 and SNAP25. As to quaternary structure, (Microbial infection) Interacts with C.botulinum neurotoxin type A (BoNT/A, botA). (Microbial infection) Interacts with C.botulinum neurotoxin type D (BoNT/D, botD). No evidence for its interaction with BoNT/D has also been published. In terms of processing, N-glycosylated. Post-translationally, the N-terminal cytoplasmic domain is phosphorylated by CK1. In terms of tissue distribution, expressed in ribbon synapses of the retina (at protein level). Expressed in diaphragm motor nerve terminals (at protein level). Expressed in hippocampus neurons (at protein level).

It localises to the cytoplasmic vesicle. The protein resides in the secretory vesicle. It is found in the synaptic vesicle membrane. The protein localises to the acrosome. Its function is as follows. Probably plays a role in the control of regulated secretion in neural and endocrine cells. In terms of biological role, (Microbial infection) Receptor for C.botulinum neurotoxin type A (BoNT/A, botA); the toxin probably binds via extracellular loop 4. (Microbial infection) Possible receptor for C.botulinum neurotoxin type D (BoNT/D, botD). Not a receptor for C.botulinum neurotoxin type D (BoNT/D, botD). Functionally, (Microbial infection) Receptor for C.botulinum neurotoxin type E (BoNT/E); the toxin probably binds via extracellular loop 4. It probably requires glycosylation of Asn-516. The polypeptide is Synaptic vesicle glycoprotein 2B (Sv2b) (Mus musculus (Mouse)).